Reading from the N-terminus, the 279-residue chain is Pantothenate synthetase (279 aa).

26-33 (MGNLHEGH) is a binding site for ATP. The active-site Proton donor is the H33. Q57 contacts (R)-pantoate. Position 57 (Q57) interacts with beta-alanine. 144 to 147 (GKKD) serves as a coordination point for ATP. Q150 is a (R)-pantoate binding site. ATP-binding positions include V173 and 181 to 184 (LSSR).

Belongs to the pantothenate synthetase family. In terms of assembly, homodimer.

It localises to the cytoplasm. It catalyses the reaction (R)-pantoate + beta-alanine + ATP = (R)-pantothenate + AMP + diphosphate + H(+). It functions in the pathway cofactor biosynthesis; (R)-pantothenate biosynthesis; (R)-pantothenate from (R)-pantoate and beta-alanine: step 1/1. In terms of biological role, catalyzes the condensation of pantoate with beta-alanine in an ATP-dependent reaction via a pantoyl-adenylate intermediate. This chain is Pantothenate synthetase, found in Burkholderia cenocepacia (strain ATCC BAA-245 / DSM 16553 / LMG 16656 / NCTC 13227 / J2315 / CF5610) (Burkholderia cepacia (strain J2315)).